The following is a 74-amino-acid chain: Kappa-stichotoxin-Sgt4a (74 aa).

Residues 1-22 (MKFQVIAAVLLIEFCLCVVVTA) form the signal peptide. A propeptide spanning residues 23–39 (RMELQDVEDVENGFQKR) is cleaved from the precursor. In terms of domain architecture, ShKT spans 42–74 (CIDTIPQSRCTAFQCKHSMKYRLSFCRKTCGTC). Intrachain disulfides connect Cys-42–Cys-74, Cys-51–Cys-67, and Cys-56–Cys-71.

It belongs to the sea anemone type 1 potassium channel toxin family. Type 1a subfamily.

The protein localises to the secreted. Its subcellular location is the nematocyst. Inhibits voltage-gated potassium channels (Kv) with higher potency for Kv1.1/KCNA1 and Kv1.3/KCNA3. The protein is Kappa-stichotoxin-Sgt4a of Stichodactyla gigantea (Giant carpet anemone).